The following is a 252-amino-acid chain: Tumor necrosis factor ligand superfamily member 15 (252 aa).

Over 1 to 39 (MAEELGLGFGEGVPVEVLPEGCRHRPEARAGLAARSKAC) the chain is Cytoplasmic. Residues 40–60 (LALTCCLLSFPILAGLSTLLM) form a helical; Signal-anchor for type II membrane protein membrane-spanning segment. Residues 61 to 252 (AGQLRVPGKD…DKTFFGAFLL (192 aa)) are Extracellular-facing. In terms of domain architecture, THD spans 96–252 (PRAHLTIKKQ…DKTFFGAFLL (157 aa)). N-linked (GlcNAc...) asparagine glycosylation occurs at N137. C163 and C203 are joined by a disulfide. A glycan (N-linked (GlcNAc...) asparagine) is linked at N230.

This sequence belongs to the tumor necrosis factor family. In terms of assembly, homotrimer.

The protein resides in the membrane. Receptor for TNFRSF25 and TNFRSF6B. Mediates activation of NF-kappa-B. Inhibits vascular endothelial growth and angiogenesis (in vitro). Promotes activation of caspases and apoptosis. Promotes splenocyte alloactivation. In Mus musculus (Mouse), this protein is Tumor necrosis factor ligand superfamily member 15 (Tnfsf15).